The following is a 338-amino-acid chain: MDPESEGPAVITVTPLQQMFASCTGAILTSLMVTPFDVVKIRLQAQNNPFPKGKCFLYSNGLMDHLCVCEEEGNKAWYKKPGHFQGTLDAFLKIIRNEGIKSLWSGLPPTLVMAVPATVIYFTCYDQLTALLRSKLGENESRIPIVAGIVARLGAVTVISPLELIRTKMQSKKFSYEELHRFVSKKVSEDGWISLWRGWAPTILRDVPFSAMYWYNYEVLKKWLCAKSGLYEPTFMINFTSGALSGSFAAVVTLPFDVVKTQKQTQLWIYESQKISMPLQMSTWTIMKNIVAKNGFSGLFTGLIPRLIKIAPACAVMISTYEFGKSFFQKQNAQRQRY.

Solcar repeat units follow at residues V13 to L131, N139 to W223, and P233 to F327. 6 helical membrane passes run M19–V39, L103–T123, I145–I165, W199–L220, F239–V259, and G298–I318.

This sequence belongs to the mitochondrial carrier (TC 2.A.29) family.

The protein localises to the mitochondrion inner membrane. It carries out the reaction glutathione(in) = glutathione(out). In terms of biological role, probable mitochondrial transporter required for glutathione import into mitochondria. Glutathione, which plays key roles in oxidative metabolism, is produced exclusively in the cytosol and is imported in many organelles. Mitochondrial glutathione is required for the activity and stability of proteins containing iron-sulfur clusters, as well as erythropoiesis. The chain is Mitochondrial glutathione transporter SLC25A40 from Bos taurus (Bovine).